A 311-amino-acid chain; its full sequence is Methionyl-tRNA formyltransferase (311 aa).

109–112 (SLLP) is a binding site for (6S)-5,6,7,8-tetrahydrofolate.

This sequence belongs to the Fmt family.

The catalysed reaction is L-methionyl-tRNA(fMet) + (6R)-10-formyltetrahydrofolate = N-formyl-L-methionyl-tRNA(fMet) + (6S)-5,6,7,8-tetrahydrofolate + H(+). Attaches a formyl group to the free amino group of methionyl-tRNA(fMet). The formyl group appears to play a dual role in the initiator identity of N-formylmethionyl-tRNA by promoting its recognition by IF2 and preventing the misappropriation of this tRNA by the elongation apparatus. This Acetivibrio thermocellus (strain ATCC 27405 / DSM 1237 / JCM 9322 / NBRC 103400 / NCIMB 10682 / NRRL B-4536 / VPI 7372) (Clostridium thermocellum) protein is Methionyl-tRNA formyltransferase.